The chain runs to 248 residues: ATP synthase subunit a, chloroplastic (248 aa).

Helical transmembrane passes span Gln38 to Val58, Val96 to Leu116, Ile135 to Ser155, Leu200 to Leu220, and Gly221 to Gly241.

The protein belongs to the ATPase A chain family. As to quaternary structure, F-type ATPases have 2 components, CF(1) - the catalytic core - and CF(0) - the membrane proton channel. CF(1) has five subunits: alpha(3), beta(3), gamma(1), delta(1), epsilon(1). CF(0) has four main subunits: a, b, b' and c.

It localises to the plastid. The protein resides in the chloroplast thylakoid membrane. In terms of biological role, key component of the proton channel; it plays a direct role in the translocation of protons across the membrane. In Amborella trichopoda, this protein is ATP synthase subunit a, chloroplastic.